The chain runs to 85 residues: Conotoxin Lt28.3 (85 aa).

An N-terminal signal peptide occupies residues 1 to 21 (MPKLEMMLLVLLILPLCYIDA). Residues 22 to 40 (VGPLPPWNMEDEIIEHWQK) constitute a propeptide that is removed on maturation.

This sequence belongs to the conotoxin D superfamily. In terms of processing, contains 5 disulfide bonds. In terms of tissue distribution, expressed by the venom duct.

It is found in the secreted. Functionally, probable neurotoxin. The chain is Conotoxin Lt28.3 from Conus litteratus (Lettered cone).